The sequence spans 157 residues: MSTKIITQGGHEALKKELDYLWREHRPDITQKVAWAASLGDRSENADYQYNKKLLREIDRRVRYLRKRLEDMRVVQYSPEQEGRVFFGAWVEIENEAGDLKKFRVVGYDEIYGRNDYISIDSPMARALLKKEVGDEVLVNTPEGEKLWFVNSIVYER.

The stretch at 52 to 73 (KKLLREIDRRVRYLRKRLEDMR) forms a coiled coil.

The protein belongs to the GreA/GreB family. GreB subfamily.

Necessary for efficient RNA polymerase transcription elongation past template-encoded arresting sites. The arresting sites in DNA have the property of trapping a certain fraction of elongating RNA polymerases that pass through, resulting in locked ternary complexes. Cleavage of the nascent transcript by cleavage factors such as GreA or GreB allows the resumption of elongation from the new 3'terminus. GreB releases sequences of up to 9 nucleotides in length. The sequence is that of Transcription elongation factor GreB from Pseudomonas syringae pv. tomato (strain ATCC BAA-871 / DC3000).